A 199-amino-acid chain; its full sequence is Probable thymidylate kinase (199 aa).

9–16 (GIDGCGKT) is a binding site for ATP.

Belongs to the thymidylate kinase family.

The enzyme catalyses dTMP + ATP = dTDP + ADP. This Methanococcus maripaludis (strain C6 / ATCC BAA-1332) protein is Probable thymidylate kinase.